The sequence spans 211 residues: MAMEDREVMEARGAGESCPTLSKVAPVDSMPEGKPKASLDAEVPKLELPTLEENGICEDRDCPGPPRSLPPKSGPNAKGQAGDGPGLESVELPLPLETEHRNAMELEKVRMEFELTLLKYLHQENERQRQHEEVMEQLQQQQQQQQALPHQFSGSLQDLLLPQNQFAMFFYCFIFIHIIYVAKETVFFLFSKHYLFCLAAILLCLIKTLWS.

Basic and acidic residues-rich tracts occupy residues 1–10 (MAMEDREVME) and 31–45 (PEGK…EVPK). The interval 1-90 (MAMEDREVME…AGDGPGLESV (90 aa)) is disordered. Residues 63–73 (PGPPRSLPPKS) are compositionally biased toward pro residues. Residues 119-148 (KYLHQENERQRQHEEVMEQLQQQQQQQQAL) adopt a coiled-coil conformation. The next 2 membrane-spanning stretches (helical) occupy residues 159–179 (LLLP…IHII) and 186–206 (VFFL…LCLI).

It is found in the membrane. The sequence is that of Transmembrane protein 247 (Tmem247) from Mus musculus (Mouse).